Here is a 467-residue protein sequence, read N- to C-terminus: Squalene synthase (467 aa).

Belongs to the phytoene/squalene synthase family. Mg(2+) serves as cofactor.

It catalyses the reaction 2 (2E,6E)-farnesyl diphosphate + NADPH + H(+) = squalene + 2 diphosphate + NADP(+). The catalysed reaction is 2 (2E,6E)-farnesyl diphosphate + NADH + H(+) = squalene + 2 diphosphate + NAD(+). It participates in terpene metabolism; lanosterol biosynthesis; lanosterol from farnesyl diphosphate: step 1/3. In terms of biological role, squalene synthase; part of the third module of ergosterol biosynthesis pathway that includes the late steps of the pathway. The third module or late pathway involves the ergosterol synthesis itself through consecutive reactions that mainly occur in the endoplasmic reticulum (ER) membrane. Firstly, the squalene synthase SQS catalyzes the condensation of 2 farnesyl pyrophosphate moieties to form squalene, which is the precursor of all steroids. Secondly, the squalene epoxidase catalyzes the stereospecific oxidation of squalene to (S)-2,3-epoxysqualene, which is considered to be a rate-limiting enzyme in steroid biosynthesis. Then, the lanosterol synthase LS catalyzes the cyclization of (S)-2,3 oxidosqualene to lanosterol, a reaction that forms the sterol core. In the next steps, lanosterol is transformed to ergosterol via a complex process involving various demethylation, reduction and desaturation reactions. Lanosterol is also an intermediate in the biosynthesis of triterpenes such as ganoderic acids (GA), a group of highly oxygenated lanostane-type triterpenoids which are well recognized as a main group of unique bioactive compounds in the medicinal mushroom Ganoderma lucidum. The polypeptide is Squalene synthase (Ganoderma lucidum (Ling zhi medicinal fungus)).